Consider the following 162-residue polypeptide: Caveolin-2 (162 aa).

Over 1 to 86 (MGLETEKADV…FEVSKYVIYK (86 aa)) the chain is Cytoplasmic. Tyrosine 19 carries the post-translational modification Phosphotyrosine; by SRC. Serine 20, serine 23, and serine 36 each carry phosphoserine. The segment at residues 87–107 (FLTLLLAMPMAFAAGVLFATL) is an intramembrane region (helical). The Cytoplasmic portion of the chain corresponds to 108-162 (SCLHIWIIMPFVKTCLMVLPSVQTIWKSVTDAVIAPLCSSVGRSFSSVSLQVSHD).

This sequence belongs to the caveolin family. Monomer or homodimer. Interacts with CAV1; the interaction forms a stable heterooligomeric complex that is required for targeting to lipid rafts and for caveolae formation. Tyrosine phosphorylated forms do not form heterooligomers with the Tyr-19-phosphorylated form existing as a monomer or dimer. Interacts (tyrosine phosphorylated form) with the SH2 domain-containing proteins, RASA1, NCK1 and SRC. Interacts (tyrosine phosphorylated form) with INSR. Interacts (Tyr-19 phosphorylated form) with MAPK1 (phosphorylated form); the interaction, promoted by insulin, leads to nuclear location and MAPK1 activation. Interacts with STAT3; the interaction is increased on insulin-induced tyrosine phosphorylation leading to STAT activation. Phosphorylated on serine and tyrosine residues. CAV1 promotes phosphorylation on Ser-23 which then targets the complex to the plasma membrane, lipid rafts and caveolae. Phosphorylation on Ser-36 appears to modulate mitosis in endothelial cells. Phosphorylation on Tyr-19 is required for insulin-induced phosphorylation of MAPK1 and DNA binding of STAT3. Tyrosine phosphorylation is induced by both EGF and insulin.

It localises to the nucleus. The protein resides in the cytoplasm. It is found in the golgi apparatus membrane. The protein localises to the cell membrane. Its subcellular location is the membrane. It localises to the caveola. May act as a scaffolding protein within caveolar membranes. Interacts directly with G-protein alpha subunits and can functionally regulate their activity. Acts as an accessory protein in conjunction with CAV1 in targeting to lipid rafts and driving caveolae formation. The Ser-36 phosphorylated form has a role in modulating mitosis in endothelial cells. Positive regulator of cellular mitogenesis of the MAPK signaling pathway. Required for the insulin-stimulated nuclear translocation and activation of MAPK1 and STAT3, and the subsequent regulation of cell cycle progression. This chain is Caveolin-2 (CAV2), found in Canis lupus familiaris (Dog).